Reading from the N-terminus, the 216-residue chain is Probable GTP-binding protein EngB (216 aa).

In terms of domain architecture, EngB-type G spans 26 to 200 (EGIEIAFAGR…RAKLDTWFAP (175 aa)). GTP is bound by residues 34–41 (GRSNAGKS), 61–65 (GRTQL), 79–82 (DLPG), 146–149 (TKAD), and 179–181 (YSS). Residues S41 and T63 each contribute to the Mg(2+) site.

Belongs to the TRAFAC class TrmE-Era-EngA-EngB-Septin-like GTPase superfamily. EngB GTPase family. Requires Mg(2+) as cofactor.

Its function is as follows. Necessary for normal cell division and for the maintenance of normal septation. The sequence is that of Probable GTP-binding protein EngB from Vibrio vulnificus (strain CMCP6).